The sequence spans 317 residues: Acetyl-coenzyme A carboxylase carboxyl transferase subunit alpha (317 aa).

The 254-residue stretch at 40–293 (LEVRVREAIV…GDVIASALAE (254 aa)) folds into the CoA carboxyltransferase C-terminal domain.

This sequence belongs to the AccA family. In terms of assembly, acetyl-CoA carboxylase is a heterohexamer composed of biotin carboxyl carrier protein (AccB), biotin carboxylase (AccC) and two subunits each of ACCase subunit alpha (AccA) and ACCase subunit beta (AccD).

It is found in the cytoplasm. It catalyses the reaction N(6)-carboxybiotinyl-L-lysyl-[protein] + acetyl-CoA = N(6)-biotinyl-L-lysyl-[protein] + malonyl-CoA. Its pathway is lipid metabolism; malonyl-CoA biosynthesis; malonyl-CoA from acetyl-CoA: step 1/1. Functionally, component of the acetyl coenzyme A carboxylase (ACC) complex. First, biotin carboxylase catalyzes the carboxylation of biotin on its carrier protein (BCCP) and then the CO(2) group is transferred by the carboxyltransferase to acetyl-CoA to form malonyl-CoA. This chain is Acetyl-coenzyme A carboxylase carboxyl transferase subunit alpha, found in Rhizobium johnstonii (strain DSM 114642 / LMG 32736 / 3841) (Rhizobium leguminosarum bv. viciae).